Consider the following 515-residue polypeptide: Maturase K (515 aa).

Belongs to the intron maturase 2 family. MatK subfamily.

The protein localises to the plastid. It is found in the chloroplast. Functionally, usually encoded in the trnK tRNA gene intron. Probably assists in splicing its own and other chloroplast group II introns. In Pinus tabuliformis (Chinese red pine), this protein is Maturase K.